The sequence spans 382 residues: Galactokinase (382 aa).

E34–D37 contacts substrate. ATP is bound at residue G124–S130. Residues S130 and E162 each coordinate Mg(2+). Residue D174 is the Proton acceptor of the active site. Y223 contributes to the substrate binding site.

The protein belongs to the GHMP kinase family. GalK subfamily.

The protein resides in the cytoplasm. It carries out the reaction alpha-D-galactose + ATP = alpha-D-galactose 1-phosphate + ADP + H(+). It participates in carbohydrate metabolism; galactose metabolism. Its function is as follows. Catalyzes the transfer of the gamma-phosphate of ATP to D-galactose to form alpha-D-galactose-1-phosphate (Gal-1-P). In Salmonella paratyphi B (strain ATCC BAA-1250 / SPB7), this protein is Galactokinase.